A 445-amino-acid polypeptide reads, in one-letter code: Inward rectifier potassium channel 4 (445 aa).

Residues 1-55 (MHGHSRNGQAHVPRRKRRNRFVKKNGQCNVYFANLSNKSQRYMADIFTTCVDTRW) lie on the Cytoplasmic side of the membrane. The chain crosses the membrane as a helical span at residues 56–80 (RYMLMIFSAAFLVSWLFFGLLFWCI). Topologically, residues 81 to 120 (AFFHGDLEASPGVPAAGGPAAGGGGAAPVAPKPCIMHVNG) are extracellular. The interval 91–111 (PGVPAAGGPAAGGGGAAPVAP) is val/Gly/Ala/Pro stretch. The segment at residues 121–132 (FLGAFLFSVETQ) is an intramembrane region (helical; Pore-forming). The segment at residues 133 to 139 (TTIGYGF) is an intramembrane region (pore-forming). The Selectivity filter motif lies at 134–139 (TIGYGF). Residues 140 to 148 (RCVTEECPL) are Extracellular-facing. Residues 149 to 170 (AVIAVVVQSIVGCVIDSFMIGT) form a helical membrane-spanning segment. Residues 171 to 445 (IMAKMARPKK…NISYRRESAI (275 aa)) are Cytoplasmic-facing. A PDZ-binding motif is present at residues 443-445 (SAI).

Belongs to the inward rectifier-type potassium channel (TC 1.A.2.1) family. KCNJ4 subfamily. In terms of assembly, homomultimeric and heteromultimeric association with KCNJ2 and KCNJ12. Interacts with DLG2 and DLG4. Associates, via its PDZ-recognition domain, with a complex containing LIN7A, LIN7B, LIN7C, DLG1, CASK and APBA1. Interacts with TAX1BP3. TAX1BP3 competes with LIN7 family members for KCNJ4 binding. Heart, skeletal muscle, and several different brain regions including the hippocampus.

It localises to the cell membrane. The protein resides in the postsynaptic cell membrane. Its subcellular location is the cytoplasmic vesicle membrane. It catalyses the reaction K(+)(in) = K(+)(out). Inward rectifier potassium channels are characterized by a greater tendency to allow potassium to flow into the cell rather than out of it. Their voltage dependence is regulated by the concentration of extracellular potassium; as external potassium is raised, the voltage range of the channel opening shifts to more positive voltages. The inward rectification is mainly due to the blockage of outward current by internal magnesium. Can be blocked by extracellular barium and cesium. The polypeptide is Inward rectifier potassium channel 4 (KCNJ4) (Homo sapiens (Human)).